Consider the following 221-residue polypeptide: Nucleolar protein 3 (221 aa).

A lipid anchor (N-myristoyl glycine) is attached at glycine 2. Residues 4 to 95 (MQERPSETID…MPDPAWDWQH (92 aa)) enclose the CARD domain. An essential for interaction with BAX region spans residues 20 to 70 (VETLQADSGLLLDALVARGVLTGPEYEALDALPDAERRVRRLLLLVQSKGE). A disordered region spans residues 107–221 (PPCPGHWTPE…GDESEGCENT (115 aa)). Acidic residues predominate over residues 132–143 (EEEEIGGPEDSE). Phosphothreonine; by CK2 is present on threonine 149. Acidic residues-rich tracts occupy residues 165 to 201 (PDLE…EPEP) and 209 to 221 (FQEG…CENT).

Oligomerizes (via CARD doamin). Interacts (via CARD domain) with CASP2; inhibits CASP2 activity in a phosphorylation-dependent manner. Interacts with CASP8; decreases CASP8 activity in a mitochondria localization- and phosphorylation-dependent manner and this interaction is dissociated by calcium. Interacts with TFPT; translocates NOL3 into the nucleus and negatively regulated TFPT-induced cell death. Interacts directly (via CARD domain) with FAS and FADD (via DED domain); inhibits death-inducing signaling complex (DISC) assembly by inhibiting the increase in FAS-FADD binding induced by FAS activation. Interacts (via CARD domain) with BAX (via a C-terminal 33 residues); inhibits BAX activation and translocation and consequently cytochrome c release from mitochondria. Interacts with PPM1G; may dephosphorylate NOL3. Interacts (via CARD domain) with BBC3 (via BH3 domain); preventing the association of BBC3 with BCL2 and resulting in activation of CASP8. Interacts (via CARD domain) with BAD(via BH3 domain); preventing the association of BAD with BCL2. Interacts directly (via CARD domain) with TNFRSF1A; inhibits TNF-signaling pathway. Phosphorylation at Thr-149 is required for its antiapoptotic effect by blocking death-inducing signaling complex (DISC) activity through the control of interaction with CASP8. Phosphorylation at Thr-149 results in translocation to mitochondria and this translocation enables the binding to CASP8. Dephosphorylated at Thr-149 by calcineurin; doesn't inhibit the association between FADD and CASP8 and the consequent apoptosis. In terms of processing, polyubiquitinated by MDM2; promoting proteasomal-dependent degradation in response to apoptotic stimuli. As to expression, highly expressed in skeletal muscle, heart and medulla.

Its subcellular location is the cytoplasm. It localises to the mitochondrion. The protein resides in the sarcoplasmic reticulum. The protein localises to the membrane. Functionally, apoptosis repressor that blocks multiple modes of cell death. Inhibits extrinsic apoptotic pathways through two different ways. Firstly by interacting with FAS and FADD upon FAS activation blocking death-inducing signaling complex (DISC) assembly. Secondly by interacting with CASP8 in a mitochondria localization- and phosphorylation-dependent manner, limiting the amount of soluble CASP8 available for DISC-mediated activation. Inhibits intrinsic apoptotic pathway in response to a wide range of stresses, through its interaction with BAX resulting in BAX inactivation, preventing mitochondrial dysfunction and release of pro-apoptotic factors. Inhibits calcium-mediated cell death by functioning as a cytosolic calcium buffer, dissociating its interaction with CASP8 and maintaining calcium homeostasis. Negatively regulates oxidative stress-induced apoptosis by phosphorylation-dependent suppression of the mitochondria-mediated intrinsic pathway, by blocking CASP2 activation and BAX translocation. Negatively regulates hypoxia-induced apoptosis in part by inhibiting the release of cytochrome c from mitochondria in a caspase-independent manner. Also inhibits TNF-induced necrosis by preventing TNF-signaling pathway through TNFRSF1A interaction abrogating the recruitment of RIPK1 to complex I. Finally through its role as apoptosis repressor, promotes vascular remodeling through inhibition of apoptosis and stimulation of proliferation, in response to hypoxia. Inhibits too myoblast differentiation through caspase inhibition. The protein is Nucleolar protein 3 (Nol3) of Rattus norvegicus (Rat).